The primary structure comprises 390 residues: Type II methyltransferase M.SacI (390 aa).

The region spanning 5–371 is the SAM-dependent MTase C5-type domain; the sequence is LPVISLFSGA…RALMEQLGYL (367 aa). Cys96 is a catalytic residue.

Belongs to the class I-like SAM-binding methyltransferase superfamily. C5-methyltransferase family.

It catalyses the reaction a 2'-deoxycytidine in DNA + S-adenosyl-L-methionine = a 5-methyl-2'-deoxycytidine in DNA + S-adenosyl-L-homocysteine + H(+). In terms of biological role, a beta methylase recognizes the double-stranded sequence 5'-GAGCTC-3', methylates C-4 on both strands, and protects the DNA from cleavage by the SacI endonuclease. This is Type II methyltransferase M.SacI from Streptomyces achromogenes.